The sequence spans 493 residues: Endothelial lipase (493 aa).

Positions 1-23 (MRDPVFLLGFWSLYCCFPAGSLT) are cleaved as a signal peptide. Cysteine 66 and cysteine 79 are joined by a disulfide. N-linked (GlcNAc...) asparagine glycosylation is found at asparagine 67 and asparagine 82. The Nucleophile role is filled by serine 171. Residue aspartate 195 is the Charge relay system of the active site. A disulfide bridge connects residues cysteine 254 and cysteine 274. Histidine 276 (charge relay system) is an active-site residue. Intrachain disulfides connect cysteine 299–cysteine 318 and cysteine 310–cysteine 313. A heparin-binding site is contributed by 327–339 (KMRKKRNSKMYLK). In terms of domain architecture, PLAT spans 349 to 484 (YHYQLKVHMF…SPGQELWFYK (136 aa)). A glycan (N-linked (GlcNAc...) asparagine) is linked at asparagine 395. Cysteine 465 and cysteine 485 are joined by a disulfide.

It belongs to the AB hydrolase superfamily. Lipase family. Head to tail Homodimer. Interacts with apolipoprotein C-2.

The protein localises to the secreted. It catalyses the reaction a triacylglycerol + H2O = a diacylglycerol + a fatty acid + H(+). The enzyme catalyses a 1,2-diacyl-sn-glycero-3-phosphocholine + H2O = a 2-acyl-sn-glycero-3-phosphocholine + a fatty acid + H(+). It carries out the reaction 1,2,3-tri-(9Z-octadecenoyl)-glycerol + H2O = di-(9Z)-octadecenoylglycerol + (9Z)-octadecenoate + H(+). The catalysed reaction is 1,2,3-tributanoylglycerol + H2O = dibutanoylglycerol + butanoate + H(+). It catalyses the reaction 1,2-dihexadecanoyl-sn-glycero-3-phosphocholine + H2O = hexadecanoyl-sn-glycero-3-phosphocholine + hexadecanoate + H(+). Its function is as follows. Exerts both phospholipase and triglyceride lipase activities. More active as a phospholipase than a triglyceride lipase. Hydrolyzes triglycerides, both with short-chain fatty acyl groups (tributyrin) and long-chain fatty acyl groups (triolein) with similar levels of activity toward both types of substrates. Hydrolyzes high density lipoproteins (HDL) more efficiently than other lipoproteins. The sequence is that of Endothelial lipase (Lipg) from Rattus norvegicus (Rat).